The primary structure comprises 421 residues: Galactooligosaccharide-binding protein (421 aa).

A signal peptide spans 1 to 22; the sequence is MKMAKKCSVFMLCAAVSLSLAA. C23 carries N-palmitoyl cysteine lipidation. C23 is lipidated: S-diacylglycerol cysteine. Positions 393–421 are disordered; it reads ATGKADPKQALDQAAETAKGQIKAKHSGK.

This sequence belongs to the bacterial solute-binding protein 1 family. In terms of assembly, the complex is composed of two ATP-binding proteins (MsmX), two transmembrane proteins (GanP and GanQ) and a solute-binding protein (GanS).

It localises to the cell membrane. Functionally, involved in galactan degradation. Part of the ABC transporter complex GanPQS involved in the uptake of galactooligosaccharides. Binds mainly galactotetraose and galactotriose. The polypeptide is Galactooligosaccharide-binding protein (Bacillus subtilis (strain 168)).